Here is a 120-residue protein sequence, read N- to C-terminus: NAD(P)H-quinone oxidoreductase subunit 3 (120 aa).

Helical transmembrane passes span 6-26 (GYDA…LALV), 64-84 (MFAL…PWAV), and 89-109 (LGLL…VALA).

It belongs to the complex I subunit 3 family. NDH-1 can be composed of about 15 different subunits; different subcomplexes with different compositions have been identified which probably have different functions.

The protein resides in the cellular thylakoid membrane. The catalysed reaction is a plastoquinone + NADH + (n+1) H(+)(in) = a plastoquinol + NAD(+) + n H(+)(out). It carries out the reaction a plastoquinone + NADPH + (n+1) H(+)(in) = a plastoquinol + NADP(+) + n H(+)(out). NDH-1 shuttles electrons from an unknown electron donor, via FMN and iron-sulfur (Fe-S) centers, to quinones in the respiratory and/or the photosynthetic chain. The immediate electron acceptor for the enzyme in this species is believed to be plastoquinone. Couples the redox reaction to proton translocation, and thus conserves the redox energy in a proton gradient. Cyanobacterial NDH-1 also plays a role in inorganic carbon-concentration. The polypeptide is NAD(P)H-quinone oxidoreductase subunit 3 (Synechococcus sp. (strain CC9902)).